Consider the following 466-residue polypeptide: UDP-N-acetylmuramoylalanine--D-glutamate ligase (466 aa).

Position 117–123 (117–123 (GTKGKTT)) interacts with ATP.

The protein belongs to the MurCDEF family.

The protein resides in the cytoplasm. It carries out the reaction UDP-N-acetyl-alpha-D-muramoyl-L-alanine + D-glutamate + ATP = UDP-N-acetyl-alpha-D-muramoyl-L-alanyl-D-glutamate + ADP + phosphate + H(+). The protein operates within cell wall biogenesis; peptidoglycan biosynthesis. Its function is as follows. Cell wall formation. Catalyzes the addition of glutamate to the nucleotide precursor UDP-N-acetylmuramoyl-L-alanine (UMA). In Roseiflexus sp. (strain RS-1), this protein is UDP-N-acetylmuramoylalanine--D-glutamate ligase.